The following is a 1733-amino-acid chain: Gag-Pol polyprotein (1733 aa).

Glycine 2 carries the N-myristoyl glycine; by host lipid modification. Positions 109–112 match the PTAP/PSAP motif motif; sequence PSAP. The span at 112 to 121 shows a compositional bias: pro residues; the sequence is PSLLPEPPLS. 2 disordered regions span residues 112–196 and 202–221; these read PSLL…ASRL and LPVADSTTSQAFPLRSGGNG. Residues 128-132 carry the LYPX(n)L motif motif; that stretch reads LYPAL. Residues 159–170 are compositionally biased toward pro residues; sequence DPPPYRDPGPPP. Positions 160–163 match the PPXY motif motif; the sequence is PPPY. Phosphoserine; by host is present on serine 190. Residues 343–391 form an interaction with host PIAS4 region; sequence GRSPTNLAKVKGITQGPNESPSAFLERLKEAYRRYTPYDPEDPGQETNV. Residues 428 to 433 are interaction with host UBE2I; that stretch reads IFNKRE. Composition is skewed to basic and acidic residues over residues 432-464 and 484-496; these read RETPEEREERIKRETEEKEERRRAEDEQKEKER and KQDRQGGERRRPQ. Disordered regions lie at residues 432–496 and 511–550; these read RETP…RRPQ and WAKDCPKKPRGPRGPRPQTSLLALDDQGGRGQEPPPEPRI. Residues 436–476 adopt a coiled-coil conformation; sequence EEREERIKRETEEKEERRRAEDEQKEKERDRRRHREMSKLL. Residues 500–517 form a CCHC-type zinc finger; it reads DQCAYCKEKGHWAKDCPK. Residues 559-629 enclose the Peptidase A2 domain; the sequence is VTFLVDTGAQ…CPYPLLGRDL (71 aa). Aspartate 564 functions as the Protease; shared with dimeric partner in the catalytic mechanism. The Reverse transcriptase domain occupies 739 to 930; it reads LDQGILVPCQ…KQVKYLGYLL (192 aa). Residues aspartate 807, aspartate 881, aspartate 882, aspartate 1181, glutamate 1219, aspartate 1240, and aspartate 1310 each contribute to the Mg(2+) site. The 147-residue stretch at 1172–1318 folds into the RNase H type-1 domain; that stretch reads PDADHTWYTD…ADQAAREVAT (147 aa). Residues 1385-1425 form an HHCC-type zinc finger; the sequence is HQLTHLSFSKTKALLERSPSPYYMLNRDRTLKNITETCKAC. The Integrase catalytic domain occupies 1442-1600; that stretch reads RGHRPGTHWE…TPYEILYGAP (159 aa). Aspartate 1453 and aspartate 1512 together coordinate Mg(2+).

In terms of assembly, homohexamer; further associates as homomultimer. The virus core is composed of a lattice formed from hexagonal rings, each containing six capsid monomers. Interacts with mouse UBE2I and mouse PIAS4. As to quaternary structure, interacts (via PPXY motif) with host NEDD4. Interacts (via PSAP motif) with host TSG101. Interacts (via LYPX(n)L motif) with host PDCD6IP. The reverse transcriptase is a monomer (Potential). Interacts (via RNase domains) with host release factor ETF1; this interaction is essential for translational readthrough of amber codon between viral gag and pol genes, as well as for viral replication. In terms of assembly, homodimer. It depends on Mg(2+) as a cofactor. Post-translationally, ubiquitinated by ITCH. Gag can recruit the ubiquitin ligase Itch in an L domain-independent manner to facilitate virus release via a mechanism that involves Gag ubiquitination. Specific enzymatic cleavages by the viral protease yield mature proteins. The protease is released by autocatalytic cleavage. The polyprotein is cleaved during and after budding, this process is termed maturation. In terms of processing, sumoylated; which is required for virus replication. Post-translationally, phosphorylated on serine residues.

The protein localises to the virion. It is found in the host cell membrane. Its subcellular location is the host late endosome membrane. It localises to the host endosome. The protein resides in the host multivesicular body. The protein localises to the host cytoplasm. The catalysed reaction is DNA(n) + a 2'-deoxyribonucleoside 5'-triphosphate = DNA(n+1) + diphosphate. The enzyme catalyses Endonucleolytic cleavage to 5'-phosphomonoester.. Its activity is regulated as follows. Most efficiently inhibited by Amprenavir, which is able to block Gag-Pol processing in infected cells. Its function is as follows. Plays a role in budding and is processed by the viral protease during virion maturation outside the cell. During budding, it recruits, in a PPXY-dependent or independent manner, Nedd4-like ubiquitin ligases that conjugate ubiquitin molecules to Gag-Pol, or to Gag-Pol binding host factors. Interaction with HECT ubiquitin ligases probably links the viral protein to the host ESCRT pathway and facilitates release. In terms of biological role, targets Gag and gag-pol polyproteins to the plasma membrane via a multipartite membrane binding signal, that includes its myristoylated N-terminus. Also mediates nuclear localization of the pre-integration complex. Constituent of the pre-integration complex (PIC) which tethers the latter to mitotic chromosomes. This allows the integration of the viral genome into the host DNA. Functionally, forms the spherical core of the virion that encapsulates the genomic RNA-nucleocapsid complex. Its function is as follows. Involved in the packaging and encapsidation of two copies of the genome. Binds with high affinity to conserved UCUG elements within the packaging signal, located near the 5'-end of the genome. This binding is dependent on genome dimerization. Acts as a nucleic acid chaperone which is involved in rearrangement of nucleic acid secondary structures during gRNA retrotranscription. In terms of biological role, the aspartyl protease mediates proteolytic cleavages of Gag and Gag-Pol polyproteins during or shortly after the release of the virion from the plasma membrane. Cleavages take place as an ordered, step-wise cascade to yield mature proteins. This process is called maturation. Displays maximal activity during the budding process just prior to particle release from the cell (Potential). Cleaves the translation initiation factor eIF4G leading to the inhibition of host cap-dependent translation. RT is a multifunctional enzyme that converts the viral dimeric RNA genome into dsDNA in the cytoplasm, shortly after virus entry into the cell. This enzyme displays a DNA polymerase activity that can copy either DNA or RNA templates, and a ribonuclease H (RNase H) activity that cleaves the RNA strand of RNA-DNA heteroduplexes in a partially processive 3' to 5' endonucleasic mode. Conversion of viral genomic RNA into dsDNA requires many steps. A tRNA binds to the primer-binding site (PBS) situated at the 5' end of the viral RNA. RT uses the 3' end of the tRNA primer to perform a short round of RNA-dependent minus-strand DNA synthesis. The reading proceeds through the U5 region and ends after the repeated (R) region which is present at both ends of viral RNA. The portion of the RNA-DNA heteroduplex is digested by the RNase H, resulting in a ssDNA product attached to the tRNA primer. This ssDNA/tRNA hybridizes with the identical R region situated at the 3' end of viral RNA. This template exchange, known as minus-strand DNA strong stop transfer, can be either intra- or intermolecular. RT uses the 3' end of this newly synthesized short ssDNA to perform the RNA-dependent minus-strand DNA synthesis of the whole template. RNase H digests the RNA template except for a polypurine tract (PPT) situated at the 5' end of the genome. It is not clear if both polymerase and RNase H activities are simultaneous. RNase H probably can proceed both in a polymerase-dependent (RNA cut into small fragments by the same RT performing DNA synthesis) and a polymerase-independent mode (cleavage of remaining RNA fragments by free RTs). Secondly, RT performs DNA-directed plus-strand DNA synthesis using the PPT that has not been removed by RNase H as primers. PPT and tRNA primers are then removed by RNase H. The 3' and 5' ssDNA PBS regions hybridize to form a circular dsDNA intermediate. Strand displacement synthesis by RT to the PBS and PPT ends produces a blunt ended, linear dsDNA copy of the viral genome that includes long terminal repeats (LTRs) at both ends. Functionally, catalyzes viral DNA integration into the host chromosome, by performing a series of DNA cutting and joining reactions. This enzyme activity takes place after virion entry into a cell and reverse transcription of the RNA genome in dsDNA. The first step in the integration process is 3' processing. This step requires a complex comprising the viral genome, matrix protein and integrase. This complex is called the pre-integration complex (PIC). The integrase protein removes 2 nucleotides from each 3' end of the viral DNA, leaving recessed CA OH's at the 3' ends. In the second step that requires cell division, the PIC enters cell nucleus. In the third step, termed strand transfer, the integrase protein joins the previously processed 3' ends to the 5' ends of strands of target cellular DNA at the site of integration. The last step is viral DNA integration into host chromosome. This is Gag-Pol polyprotein (gag-pol) from Cas-Br-E murine leukemia virus.